A 509-amino-acid polypeptide reads, in one-letter code: MNEQQRLASQQANSSKKKEEKDYSKYFESVYQPPSLKEAKKRGKEEVKIERDFGLPEEFRNFGTGRKFYIRTYGCQMNEHDTEVMAGIFTALGYEPTFSTEEADVVLLNTCAIRENAENKVFGELGHLKALKRRNPDLLIGVCGCMSQEESVVNKIMQKNQHVDMVFGTHNIHRLPYILKDAMFSKETVVEVWSKEGDVIENLPKVRRGDIKAWVNIMYGCDKFCTYCIVPYTRGKERSRRPEDIIQEIRHLAANGYKEITLLGQNVNAYGKDFEDIEYGLGDLMDELRKVDIARIRFTTSHPRDFDDHLIEVLGKGGNLVEHIHLPVQSGSTEMLKIMARKYSREHYLELVRKIKEAIPNAVLTTDIIVGFPNETDEQFEETMSLYREVGFDTAFTFIYSPREGTPAAKMKDNVPMEVKKERLQRLNALVNKLAIEKNNRYKGQIVEVLVDGESKNNPEVLAGYTRTNKLVNFVAPKSLIGQLVKVKVTDAKTWSLNGELVEEPIEVE.

Polar residues predominate over residues 1–13 (MNEQQRLASQQAN). The interval 1–26 (MNEQQRLASQQANSSKKKEEKDYSKY) is disordered. The segment covering 16–25 (KKKEEKDYSK) has biased composition (basic and acidic residues). Positions 66–184 (RKFYIRTYGC…LPYILKDAMF (119 aa)) constitute an MTTase N-terminal domain. Residues Cys-75, Cys-111, Cys-145, Cys-221, Cys-225, and Cys-228 each coordinate [4Fe-4S] cluster. Residues 207 to 437 (RRGDIKAWVN…NALVNKLAIE (231 aa)) form the Radical SAM core domain. A TRAM domain is found at 440–503 (NRYKGQIVEV…TWSLNGELVE (64 aa)).

It belongs to the methylthiotransferase family. MiaB subfamily. Monomer. The cofactor is [4Fe-4S] cluster.

Its subcellular location is the cytoplasm. It carries out the reaction N(6)-dimethylallyladenosine(37) in tRNA + (sulfur carrier)-SH + AH2 + 2 S-adenosyl-L-methionine = 2-methylsulfanyl-N(6)-dimethylallyladenosine(37) in tRNA + (sulfur carrier)-H + 5'-deoxyadenosine + L-methionine + A + S-adenosyl-L-homocysteine + 2 H(+). Its function is as follows. Catalyzes the methylthiolation of N6-(dimethylallyl)adenosine (i(6)A), leading to the formation of 2-methylthio-N6-(dimethylallyl)adenosine (ms(2)i(6)A) at position 37 in tRNAs that read codons beginning with uridine. This Bacillus cereus (strain ATCC 10987 / NRS 248) protein is tRNA-2-methylthio-N(6)-dimethylallyladenosine synthase.